A 270-amino-acid polypeptide reads, in one-letter code: UPF0246 protein PsycPRwf_0637 (270 aa).

It belongs to the UPF0246 family.

This is UPF0246 protein PsycPRwf_0637 from Psychrobacter sp. (strain PRwf-1).